We begin with the raw amino-acid sequence, 1159 residues long: Cation channel sperm-associated auxiliary subunit gamma (1159 aa).

Residues 1–35 (MCGPAMFPAGPRWPRVRVLQVLWALLAVLLASRRL) form the signal peptide. Residues 36 to 1065 (WAIKDFEECT…IHGLPLSPKR (1030 aa)) lie on the Extracellular side of the membrane. 2 disulfide bridges follow: Cys-44–Cys-105 and Cys-159–Cys-165. N-linked (GlcNAc...) asparagine glycosylation occurs at Asn-102. N-linked (GlcNAc...) asparagine glycosylation is present at Asn-177. A disulfide bridge connects residues Cys-288 and Cys-343. N-linked (GlcNAc...) asparagine glycosylation occurs at Asn-355. An intrachain disulfide couples Cys-394 to Cys-402. Residues Asn-426 and Asn-574 are each glycosylated (N-linked (GlcNAc...) asparagine). Cystine bridges form between Cys-638/Cys-860, Cys-806/Cys-834, Cys-882/Cys-1046, Cys-909/Cys-918, and Cys-1010/Cys-1016. Residues 1066–1087 (ALFILMVSLSVFVGLVIFYIAF) traverse the membrane as a helical segment. The Cytoplasmic portion of the chain corresponds to 1088–1159 (CLLWPLVVKG…KEAVERQLMT (72 aa)). The interval 1138–1159 (FSSRMTEDKAEPKEAVERQLMT) is disordered. Over residues 1142 to 1159 (MTEDKAEPKEAVERQLMT) the composition is skewed to basic and acidic residues.

It belongs to the CATSPERG family. As to quaternary structure, component of the CatSper complex or CatSpermasome composed of the core pore-forming members CATSPER1, CATSPER2, CATSPER3 and CATSPER4 as well as auxiliary members CATSPERB, CATSPERG, CATSPERD, CATSPERE, CATSPERZ, SCLO6C1, TMEM249, TMEM262 and EFCAB9. HSPA1 may be an additional auxiliary complex member. The core complex members CATSPER1, CATSPER2, CATSPER3 and CATSPER4 form a heterotetrameric channel. The auxiliary CATSPERB, CATSPERG, CATSPERD and CATSPERE subunits form a pavilion-like structure over the pore which stabilizes the complex through interactions with CATSPER4, CATSPER3, CATSPER1 and CATSPER2 respectively. TMEM262/CATSPERH interacts with CATSPERB, further stabilizing the complex. C2CD6/CATSPERT interacts at least with CATSPERD and is required for targeting the CatSper complex in the flagellar membrane.

Its subcellular location is the cell projection. The protein localises to the cilium. It is found in the flagellum membrane. Functionally, auxiliary component of the CatSper complex, a complex involved in sperm cell hyperactivation. Sperm cell hyperactivation is needed for sperm motility which is essential late in the preparation of sperm for fertilization. The sequence is that of Cation channel sperm-associated auxiliary subunit gamma from Macaca fascicularis (Crab-eating macaque).